The sequence spans 75 residues: Putative membrane protein insertion efficiency factor (75 aa).

Belongs to the UPF0161 family.

It is found in the cell membrane. Its function is as follows. Could be involved in insertion of integral membrane proteins into the membrane. The chain is Putative membrane protein insertion efficiency factor from Bacillus velezensis (strain DSM 23117 / BGSC 10A6 / LMG 26770 / FZB42) (Bacillus amyloliquefaciens subsp. plantarum).